The following is a 350-amino-acid chain: Protein pelota homolog (350 aa).

The protein belongs to the eukaryotic release factor 1 family. Pelota subfamily. In terms of assembly, monomer. The cofactor is a divalent metal cation.

It localises to the cytoplasm. In terms of biological role, may function in recognizing stalled ribosomes, interact with stem-loop structures in stalled mRNA molecules, and effect endonucleolytic cleavage of the mRNA. May play a role in the release non-functional ribosomes and degradation of damaged mRNAs. Has endoribonuclease activity. The protein is Protein pelota homolog of Methanosarcina barkeri (strain Fusaro / DSM 804).